The following is a 123-amino-acid chain: Putative membrane protein insertion efficiency factor (123 aa).

The segment at 1–23 (MGSCGGKHTGKGAPKPYSRNFTD) is disordered.

Belongs to the UPF0161 family.

The protein resides in the cell inner membrane. In terms of biological role, could be involved in insertion of integral membrane proteins into the membrane. The protein is Putative membrane protein insertion efficiency factor of Brucella abortus (strain 2308).